A 257-amino-acid polypeptide reads, in one-letter code: DKKEPDMFLLSECKAPEENEKINLGCLVIGSQPLKISWEPKKSSIVEHVFPSEMRNGNYTMVLQVTVLASELNLNHTCTINKPKRKEKPFKFPESWDSQSSKRVTPTLQAKNHSTEATKAITTKKDIEGAMAPSNLTVNILTTSTHPEMSSWLLCEVSGFFPENIHLMWLGVHSKMKSTNFVTANPTAQPGGTFQTWSVLRLPVALSSSLDTYTCVVEHEASKTKLNASKSLAISGCYHLLPESDGPSRRPDGPALA.

Positions 5–105 (PDMFLLSECK…WDSQSSKRVT (101 aa)) constitute an Ig-like 1 domain. Cysteine 26 and cysteine 78 form a disulfide bridge. N-linked (GlcNAc...) asparagine glycans are attached at residues asparagine 58 and asparagine 75. The interval 89-111 (PFKFPESWDSQSSKRVTPTLQAK) is disordered. Residues 96–111 (WDSQSSKRVTPTLQAK) show a composition bias toward polar residues. N-linked (GlcNAc...) asparagine glycosylation is found at asparagine 112, asparagine 135, and asparagine 227. The 101-residue stretch at 133 to 233 (PSNLTVNILT…TKLNASKSLA (101 aa)) folds into the Ig-like 2 domain.

As to expression, cell lines producing IgD contain several mRNA species for Ig delta chains. In plasmacytomas, the secreted form is the major component, and the membrane-bound form is a minor component. In spleen, however, the membrane-bound form is the major component. These two forms differ in their C-terminal segments.

Its subcellular location is the secreted. The polypeptide is Ig delta chain C region secreted form (Mus musculus (Mouse)).